Reading from the N-terminus, the 353-residue chain is Ribosomal RNA small subunit methyltransferase (353 aa).

Basic residues predominate over residues M1–K10. The segment at M1 to Q23 is disordered. Residues H35, L37, G62, E83, D111, and N126 each coordinate S-adenosyl-L-methionine. Residues A270 to K313 form a disordered region. Over residues M285–E308 the composition is skewed to acidic residues.

This sequence belongs to the class I-like SAM-binding methyltransferase superfamily. rRNA adenine N(6)-methyltransferase family. As to expression, expressed in rapidly dividing tissues, including root meristems and lateral root primordia, developing cotyledons and leaves, petals, anther, pollen grains and silique abscission zone.

It is found in the nucleus. Its subcellular location is the nucleolus. It catalyses the reaction adenosine(1785)/adenosine(1786) in 18S rRNA + 4 S-adenosyl-L-methionine = N(6)-dimethyladenosine(1785)/N(6)-dimethyladenosine(1786) in 18S rRNA + 4 S-adenosyl-L-homocysteine + 4 H(+). Its function is as follows. N6-adenine methyltransferase which modifies the AA dinucleotide at the plant nuclear 18S rRNA nucleotides A1785 and A1786. Required for generating appropriate patterns of gene expression during root development, including the cell-specific expression of transcriptional regulators involved in root hair and non-hair cells patterning. This Arabidopsis thaliana (Mouse-ear cress) protein is Ribosomal RNA small subunit methyltransferase.